The primary structure comprises 360 residues: Membrane-bound lytic murein transglycosylase C (360 aa).

The signal sequence occupies residues 1-16 (MKKFFALALVAPLLIS). Residue C17 is the site of N-palmitoyl cysteine attachment. C17 carries S-diacylglycerol cysteine lipidation.

Belongs to the transglycosylase Slt family.

Its subcellular location is the cell outer membrane. The catalysed reaction is Exolytic cleavage of the (1-&gt;4)-beta-glycosidic linkage between N-acetylmuramic acid (MurNAc) and N-acetylglucosamine (GlcNAc) residues in peptidoglycan, from either the reducing or the non-reducing ends of the peptidoglycan chains, with concomitant formation of a 1,6-anhydrobond in the MurNAc residue.. Its function is as follows. Murein-degrading enzyme. May play a role in recycling of muropeptides during cell elongation and/or cell division. This is Membrane-bound lytic murein transglycosylase C from Citrobacter koseri (strain ATCC BAA-895 / CDC 4225-83 / SGSC4696).